Here is a 197-residue protein sequence, read N- to C-terminus: Putative RNA-binding protein EEED8.12 (197 aa).

The RRM domain maps to 61-138; sequence KSVFIGNVDF…RPIVVTAKRT (78 aa). The interval 142–166 is disordered; sequence GMGHGVRGSSRGTFGRGRGAARGAP.

This is Putative RNA-binding protein EEED8.12 from Caenorhabditis elegans.